The chain runs to 213 residues: Orotate phosphoribosyltransferase (213 aa).

Position 26 (lysine 26) interacts with 5-phospho-alpha-D-ribose 1-diphosphate. 34–35 (FF) is a binding site for orotate. Residues 72 to 73 (YK), arginine 99, lysine 100, lysine 103, histidine 105, and 124 to 132 (DDVITAGTA) contribute to the 5-phospho-alpha-D-ribose 1-diphosphate site. 2 residues coordinate orotate: threonine 128 and arginine 156.

This sequence belongs to the purine/pyrimidine phosphoribosyltransferase family. PyrE subfamily. In terms of assembly, homodimer. Mg(2+) serves as cofactor.

It catalyses the reaction orotidine 5'-phosphate + diphosphate = orotate + 5-phospho-alpha-D-ribose 1-diphosphate. Its pathway is pyrimidine metabolism; UMP biosynthesis via de novo pathway; UMP from orotate: step 1/2. In terms of biological role, catalyzes the transfer of a ribosyl phosphate group from 5-phosphoribose 1-diphosphate to orotate, leading to the formation of orotidine monophosphate (OMP). The sequence is that of Orotate phosphoribosyltransferase from Escherichia coli O45:K1 (strain S88 / ExPEC).